Reading from the N-terminus, the 381-residue chain is MSGVVRTLSRCLLPAEAGGARERRAGSGARDAEREARRRSRDIDALLARERRAVRRLVKILLLGAGESGKSTFLKQMRIIHGREFDQKALLEFRDTIFDNILKGSRVLVDARDKLGIPWQYSENEKHGMFLMAFENKAGLPVEPATFQLYVPALSALWRDSGIREAFSRRSEFQLGESVKYFLDNLDRIGQLNYFPSKQDILLARKATKGIVEHDFVIKKIPFKMVDVGGQRSQRQKWFQCFDGITSILFMVSSSEYDQVLMEDRRTNRLVESMNIFETIVNNKLFFNVSIILFLNKMDLLVEKVKTVSIKKHFPDFRGDPHRLEDVQRYLVQCFDRKRRNRSKPLFHHFTTAIDTENVRFVFHAVKDTILQENLKDIMLQ.

A lipid anchor (S-palmitoyl cysteine) is attached at Cys-11. Residues 56–381 form the G-alpha domain; the sequence is RLVKILLLGA…QENLKDIMLQ (326 aa). The G1 motif stretch occupies residues 59 to 72; that stretch reads KILLLGAGESGKST. Residues 67–72 and 202–205 contribute to the GTP site; these read ESGKST and LLAR. Position 71 (Ser-71) interacts with Mg(2+). The tract at residues 200-208 is G2 motif; it reads DILLARKAT. Thr-208 lines the Mg(2+) pocket. Thr-208 bears the Phosphothreonine mark. Positions 223–232 are G3 motif; sequence FKMVDVGGQR. The interval 292-299 is G4 motif; the sequence is ILFLNKMD. Residues 296–299 and Ala-353 each bind GTP; that span reads NKMD. Residues 351–356 form a G5 motif region; that stretch reads TTAIDT.

The protein belongs to the G-alpha family. G(12) subfamily. In terms of assembly, g proteins are composed of 3 units; alpha, beta and gamma. The alpha chain contains the guanine nucleotide binding site. Interacts with UBXD5. Interacts (in GTP-bound form) with PPP5C (via TPR repeats); activates PPP5C phosphatase activity and translocates PPP5C to the cell membrane. Interacts with RGS22. Interacts (via N-terminus) with NAPA; the interaction promotes CDH5 localization to plasma membrane. Interacts with CTNND1 (via N-terminus); the interaction regulates CDH1-mediated cell-cell adhesion. Interacts with PPP2R1A; the interaction promotes protein phosphatase 2A activation causing dephosphorylation of MAPT. Interacts (in GTP-bound form) with ARHGEF1. Interacts (in GTP-bound form) with ARHGEF11 (via RGS domain). Interacts (in GTP-bound form) with ARHGEF12 (via RGS domain).

It localises to the cell membrane. Its subcellular location is the lateral cell membrane. It is found in the cytoplasm. Guanine nucleotide-binding proteins (G proteins) are involved as modulators or transducers in various transmembrane signaling systems. Activates effector molecule RhoA by binding and activating RhoGEFs (ARHGEF12/LARG). GNA12-dependent Rho signaling subsequently regulates transcription factor AP-1 (activating protein-1). GNA12-dependent Rho signaling also regulates protein phosphatese 2A activation causing dephosphorylation of its target proteins. Promotes tumor cell invasion and metastasis by activating RhoA/ROCK signaling pathway and up-regulating pro-inflammatory cytokine production. Inhibits CDH1-mediated cell adhesion in process independent from Rho activation. Together with NAPA promotes CDH5 localization to plasma membrane. May play a role in the control of cell migration through the TOR signaling cascade. The protein is Guanine nucleotide-binding protein subunit alpha-12 (GNA12) of Homo sapiens (Human).